Consider the following 512-residue polypeptide: Transactivator/viroplasmin protein (512 aa).

Disordered regions lie at residues 76–123 (GNER…NPVA) and 474–512 (ADSSSTSGEQNNVEKSCPDSPLTNAYDERSDDHKRIPSI). Residues 476-487 (SSSTSGEQNNVE) are compositionally biased toward polar residues. The segment covering 499–512 (YDERSDDHKRIPSI) has biased composition (basic and acidic residues).

This sequence belongs to the caulimoviridae viroplasmin family.

It localises to the host cytoplasm. Its function is as follows. Enhances the translation of downstream ORFs on polycistronic mRNAs derived from figwort mosaic virus. This Figwort mosaic virus (strain DxS) (FMV) protein is Transactivator/viroplasmin protein.